The following is a 150-amino-acid chain: Cytochrome c oxidase subunit 5A, mitochondrial (150 aa).

A mitochondrion-targeting transit peptide spans 1-41; the sequence is MLGAALRRCAVAATTRAGPRGLLHSARTPGPAAAIQSVRCY. Residues 2-17 carry the SIFI-degron motif; it reads LGAALRRCAVAATTRA. Lys-87 and Lys-113 each carry N6-acetyllysine. Residue Thr-141 is modified to Phosphothreonine.

The protein belongs to the cytochrome c oxidase subunit 5A family. As to quaternary structure, component of the cytochrome c oxidase (complex IV, CIV), a multisubunit enzyme composed of 14 subunits. The complex is composed of a catalytic core of 3 subunits MT-CO1, MT-CO2 and MT-CO3, encoded in the mitochondrial DNA, and 11 supernumerary subunits COX4I, COX5A, COX5B, COX6A, COX6B, COX6C, COX7A, COX7B, COX7C, COX8 and NDUFA4, which are encoded in the nuclear genome. The complex exists as a monomer or a dimer and forms supercomplexes (SCs) in the inner mitochondrial membrane with NADH-ubiquinone oxidoreductase (complex I, CI) and ubiquinol-cytochrome c oxidoreductase (cytochrome b-c1 complex, complex III, CIII), resulting in different assemblies (supercomplex SCI(1)III(2)IV(1) and megacomplex MCI(2)III(2)IV(2)). Interacts with AFG1L. Interacts with RAB5IF. In terms of processing, in response to mitochondrial stress, the precursor protein is ubiquitinated by the SIFI complex in the cytoplasm before mitochondrial import, leading to its degradation. Within the SIFI complex, UBR4 initiates ubiquitin chain that are further elongated or branched by KCMF1.

Its subcellular location is the mitochondrion inner membrane. Its pathway is energy metabolism; oxidative phosphorylation. Functionally, component of the cytochrome c oxidase, the last enzyme in the mitochondrial electron transport chain which drives oxidative phosphorylation. The respiratory chain contains 3 multisubunit complexes succinate dehydrogenase (complex II, CII), ubiquinol-cytochrome c oxidoreductase (cytochrome b-c1 complex, complex III, CIII) and cytochrome c oxidase (complex IV, CIV), that cooperate to transfer electrons derived from NADH and succinate to molecular oxygen, creating an electrochemical gradient over the inner membrane that drives transmembrane transport and the ATP synthase. Cytochrome c oxidase is the component of the respiratory chain that catalyzes the reduction of oxygen to water. Electrons originating from reduced cytochrome c in the intermembrane space (IMS) are transferred via the dinuclear copper A center (CU(A)) of subunit 2 and heme A of subunit 1 to the active site in subunit 1, a binuclear center (BNC) formed by heme A3 and copper B (CU(B)). The BNC reduces molecular oxygen to 2 water molecules using 4 electrons from cytochrome c in the IMS and 4 protons from the mitochondrial matrix. In Pan troglodytes (Chimpanzee), this protein is Cytochrome c oxidase subunit 5A, mitochondrial (COX5A).